The sequence spans 104 residues: Glutaredoxin-C15 (104 aa).

Residues 1–103 (MERVAKLSTE…PMLKAAGAIW (103 aa)) enclose the Glutaredoxin domain. A disulfide bridge links cysteine 21 with cysteine 24.

The protein belongs to the glutaredoxin family. CC-type subfamily.

The protein localises to the cytoplasm. Its function is as follows. Has a glutathione-disulfide oxidoreductase activity in the presence of NADPH and glutathione reductase. Reduces low molecular weight disulfides and proteins. The polypeptide is Glutaredoxin-C15 (GRXC15) (Oryza sativa subsp. japonica (Rice)).